The following is an 86-amino-acid chain: Kappa-theraphotoxin-Cg1c (86 aa).

A signal peptide spans 1-21 (MKVSVLITLAVLGVMFVWASA). Residues 22–50 (AELEERGSDHRDSPAWLKSMERIFQSEER) constitute a propeptide that is removed on maturation. Intrachain disulfides connect C52-C66, C59-C71, and C65-C78.

It belongs to the neurotoxin 10 (Hwtx-1) family. 28 (Jztx-11) subfamily. In terms of tissue distribution, expressed by the venom gland.

The protein resides in the secreted. Probable ion channel inhibitor. The polypeptide is Kappa-theraphotoxin-Cg1c (Chilobrachys guangxiensis (Chinese earth tiger tarantula)).